A 191-amino-acid polypeptide reads, in one-letter code: Probable GTP-binding protein EngB (191 aa).

The 169-residue stretch at 22-190 folds into the EngB-type G domain; the sequence is RLPEIAFLGR…WQAITTTLQA (169 aa). GTP is bound by residues 30–37, 57–61, 75–78, 142–145, and 169–171; these read GRSNVGKS, GRTQT, DLPG, TKTD, and FSA. Mg(2+)-binding residues include serine 37 and threonine 59.

This sequence belongs to the TRAFAC class TrmE-Era-EngA-EngB-Septin-like GTPase superfamily. EngB GTPase family. It depends on Mg(2+) as a cofactor.

Its function is as follows. Necessary for normal cell division and for the maintenance of normal septation. The protein is Probable GTP-binding protein EngB of Solibacter usitatus (strain Ellin6076).